The primary structure comprises 147 residues: 3-dehydroquinate dehydratase (147 aa).

The active-site Proton acceptor is the Y24. Substrate contacts are provided by N74, H80, and D87. H100 serves as the catalytic Proton donor. Substrate-binding positions include 101 to 102 and R111; that span reads LS.

This sequence belongs to the type-II 3-dehydroquinase family. In terms of assembly, homododecamer.

It catalyses the reaction 3-dehydroquinate = 3-dehydroshikimate + H2O. Its pathway is metabolic intermediate biosynthesis; chorismate biosynthesis; chorismate from D-erythrose 4-phosphate and phosphoenolpyruvate: step 3/7. Catalyzes a trans-dehydration via an enolate intermediate. The polypeptide is 3-dehydroquinate dehydratase (Azorhizobium caulinodans (strain ATCC 43989 / DSM 5975 / JCM 20966 / LMG 6465 / NBRC 14845 / NCIMB 13405 / ORS 571)).